The chain runs to 331 residues: Probable deacetylase MTH_1194 (331 aa).

His118 serves as the catalytic Proton donor/acceptor. Zn(2+)-binding residues include Asp155, His157, and Asp244.

Belongs to the histone deacetylase family. Zn(2+) serves as cofactor.

Functionally, probable deacetylase. In Methanothermobacter thermautotrophicus (strain ATCC 29096 / DSM 1053 / JCM 10044 / NBRC 100330 / Delta H) (Methanobacterium thermoautotrophicum), this protein is Probable deacetylase MTH_1194.